The following is a 228-amino-acid chain: Small ribosomal subunit protein uS2c (228 aa).

It belongs to the universal ribosomal protein uS2 family.

The protein resides in the plastid. It localises to the chloroplast. This is Small ribosomal subunit protein uS2c (rps2) from Mesostigma viride (Green alga).